Reading from the N-terminus, the 599-residue chain is Sulfite reductase [NADPH] flavoprotein alpha-component (599 aa).

The Flavodoxin-like domain maps to 64–202 (ITLISASQTG…AAAEWRARVV (139 aa)). FMN is bound by residues 70 to 75 (SQTGNA), 117 to 120 (STQG), and 153 to 162 (LGDTSYEFFC). Positions 234-448 (EAPLTATLSV…IEHNDNFRLP (215 aa)) constitute an FAD-binding FR-type domain. Residues Thr-322, Ala-356, 386 to 389 (RLYS), 404 to 406 (TVG), Tyr-410, and 419 to 422 (GGAS) contribute to the FAD site. NADP(+) is bound by residues 519–520 (SR), 525–529 (KIYVQ), and Asp-561. Residue Tyr-599 participates in FAD binding.

Belongs to the NADPH-dependent sulphite reductase flavoprotein subunit CysJ family. It in the N-terminal section; belongs to the flavodoxin family. The protein in the C-terminal section; belongs to the flavoprotein pyridine nucleotide cytochrome reductase family. Alpha(8)-beta(8). The alpha component is a flavoprotein, the beta component is a hemoprotein. Requires FAD as cofactor. The cofactor is FMN.

The enzyme catalyses hydrogen sulfide + 3 NADP(+) + 3 H2O = sulfite + 3 NADPH + 4 H(+). It functions in the pathway sulfur metabolism; hydrogen sulfide biosynthesis; hydrogen sulfide from sulfite (NADPH route): step 1/1. In terms of biological role, component of the sulfite reductase complex that catalyzes the 6-electron reduction of sulfite to sulfide. This is one of several activities required for the biosynthesis of L-cysteine from sulfate. The flavoprotein component catalyzes the electron flow from NADPH -&gt; FAD -&gt; FMN to the hemoprotein component. The protein is Sulfite reductase [NADPH] flavoprotein alpha-component of Klebsiella pneumoniae subsp. pneumoniae (strain ATCC 700721 / MGH 78578).